We begin with the raw amino-acid sequence, 442 residues long: 26S proteasome non-ATPase regulatory subunit 12 homolog B (442 aa).

Positions 1–129 (MEESRQLESS…KEEQGLIAEA (129 aa)) form a coiled coil. A PCI domain is found at 232 to 403 (EICRSYKAIY…GIICFQIVKD (172 aa)).

The protein belongs to the proteasome subunit p55 family. In terms of assembly, component of the 19S regulatory particle (RP/PA700) lid subcomplex of the 26S proteasome. The 26S proteasome is composed of a core protease (CP), known as the 20S proteasome, capped at one or both ends by the 19S regulatory particle (RP/PA700). The RP/PA700 complex is composed of at least 17 different subunits in two subcomplexes, the base and the lid, which form the portions proximal and distal to the 20S proteolytic core, respectively. In terms of tissue distribution, ubiquitous with highest expression in flowers.

Its subcellular location is the cytoplasm. The protein localises to the nucleus. Functionally, acts as a regulatory subunit of the 26 proteasome which is involved in the ATP-dependent degradation of ubiquitinated proteins. Acts redundantly with RPN5A. In Arabidopsis thaliana (Mouse-ear cress), this protein is 26S proteasome non-ATPase regulatory subunit 12 homolog B (RPN5B).